Reading from the N-terminus, the 234-residue chain is Zinc finger FYVE domain-containing protein 21 (234 aa).

Residues 44 to 104 form an FYVE-type zinc finger; the sequence is DKECRRCMQC…QCAECALVSL (61 aa). Cys50, Cys53, Cys66, Cys69, Cys74, Cys77, Cys96, and Cys99 together coordinate Zn(2+). The PH-like stretch occupies residues 107–234; that stretch reads AEFYDKQLKV…AKLLYESRDQ (128 aa).

In terms of assembly, interacts with PTK2/FAK1.

It localises to the cell junction. The protein resides in the focal adhesion. Its subcellular location is the cytoplasmic vesicle. The protein localises to the endosome. Its function is as follows. Plays a role in cell adhesion, and thereby in cell motility which requires repeated formation and disassembly of focal adhesions. Regulates microtubule-induced PTK2/FAK1 dephosphorylation, an event important for focal adhesion disassembly, as well as integrin beta-1/ITGB1 cell surface expression. This is Zinc finger FYVE domain-containing protein 21 (ZFYVE21) from Homo sapiens (Human).